We begin with the raw amino-acid sequence, 258 residues long: Isoprenyl transferase 1 (258 aa).

Asp39 is an active-site residue. Asp39 is a binding site for Mg(2+). Substrate contacts are provided by residues 40–43 (GNRR), Trp44, Arg52, His57, and 85–87 (SND). Catalysis depends on Asn88, which acts as the Proton acceptor. Residues Arg92, Arg207, and 213-215 (RLS) contribute to the substrate site. Glu226 provides a ligand contact to Mg(2+).

Belongs to the UPP synthase family. As to quaternary structure, homodimer. Mg(2+) serves as cofactor.

In terms of biological role, catalyzes the condensation of isopentenyl diphosphate (IPP) with allylic pyrophosphates generating different type of terpenoids. In Tropheryma whipplei (strain TW08/27) (Whipple's bacillus), this protein is Isoprenyl transferase 1.